We begin with the raw amino-acid sequence, 1148 residues long: Alpha-mannosidase 2 (1148 aa).

Topologically, residues 1 to 5 (MKLSR) are cytoplasmic. The helical; Signal-anchor for type II membrane protein transmembrane segment at 6 to 26 (QFTVFGSAIFCVVIFSLYLML) threads the bilayer. Topologically, residues 27–1148 (DRGHLDYPRG…EISTSRIRLR (1122 aa)) are lumenal. Residues serine 80 and serine 82 each carry the phosphoserine modification. The N-linked (GlcNAc...) asparagine glycan is linked to asparagine 93. Zn(2+) is bound by residues histidine 174, aspartate 176, aspartate 288, and histidine 568. Aspartate 288 serves as the catalytic Nucleophile. Positions 1121 to 1148 (MHSPPDAQNTSEVSLSPMEISTSRIRLR) are disordered.

It belongs to the glycosyl hydrolase 38 family. As to quaternary structure, homodimer; disulfide-linked. It depends on Zn(2+) as a cofactor. In terms of processing, glycosylated. As to expression, liver.

It localises to the golgi apparatus membrane. It catalyses the reaction N(4)-{beta-D-GlcNAc-(1-&gt;2)-alpha-D-Man-(1-&gt;3)-[alpha-D-Man-(1-&gt;3)-[alpha-D-Man-(1-&gt;6)]-alpha-D-Man-(1-&gt;6)]-beta-D-Man-(1-&gt;4)-beta-D-GlcNAc-(1-&gt;4)-beta-D-GlcNAc}-L-asparaginyl-[protein] + 2 H2O = 2 alpha-D-mannopyranose + an N(4)-{beta-D-GlcNAc-(1-&gt;2)-alpha-D-Man-(1-&gt;3)-[alpha-D-Man-(1-&gt;6)]-beta-D-Man-(1-&gt;4)-beta-D-GlcNAc-(1-&gt;4)-beta-D-GlcNAc}-L-asparaginyl-[protein]. It participates in protein modification; protein glycosylation. Inhibited by swainsonine. Catalyzes the first committed step in the biosynthesis of complex N-glycans. It controls conversion of high mannose to complex N-glycans; the final hydrolytic step in the N-glycan maturation pathway. This chain is Alpha-mannosidase 2 (Man2a1), found in Rattus norvegicus (Rat).